A 377-amino-acid chain; its full sequence is Histone deacetylase 8 (377 aa).

A histone deacetylase region spans residues 5–336; that stretch reads RVDVFWHEGM…LHAMLEGVLK (332 aa). His145 (proton donor/acceptor) is an active-site residue. Zn(2+) is bound by residues Asp182, His184, and Asp274.

The protein belongs to the histone deacetylase family. Zn(2+) is required as a cofactor. As to expression, expressed in stems, leaves, flowers, siliques and mature seeds.

Its subcellular location is the nucleus. The protein localises to the cytoplasm. The enzyme catalyses N(6)-acetyl-L-lysyl-[histone] + H2O = L-lysyl-[histone] + acetate. Its function is as follows. Responsible for the deacetylation of lysine residues on the N-terminal part of the core histones (H2A, H2B, H3 and H4). Histone deacetylation gives a tag for epigenetic repression and plays an important role in transcriptional regulation, cell cycle progression and developmental events. Histone deacetylases act via the formation of large multiprotein complexes. The protein is Histone deacetylase 8 of Arabidopsis thaliana (Mouse-ear cress).